The following is a 5400-amino-acid chain: Midasin (5400 aa).

AAA-ATPase protomer regions lie at residues 345 to 571, 656 to 986, 1050 to 1308, 1347 to 1652, 1769 to 2023, and 2074 to 2347; these read MVSL…HGLP, LLEK…AIKA, SYVK…EKVV, SMRR…VNMA, VLRV…VLRI, and IRQN…MMGP. ATP is bound by residues 360–367, 674–681, 1079–1086, 1369–1376, 1786–1793, and 2095–2102; these read GPSGSGKS, GETGTGKT, GPTSSGKT, GDTGGGKT, GSPGVGKT, and GPSSSGKT. Positions 2435–4569 are linker; it reads IYLSSLGVTD…DGVGAKDVSD (2135 aa). 3 coiled-coil regions span residues 2896 to 2916, 3233 to 3253, and 3896 to 3916; these read LERLKLEKKRLEDKMGFSEID, AMKITCKLLKLEEKISSLELN, and MEQLDLNRKNVETELKEVLKL. Disordered regions lie at residues 4540–4890, 4905–4929, and 4990–5069; these read EEDD…SSSN, TLTDNLPKMEFPQNQSSTAQQTKVN, and QVNT…RMDS. The segment covering 4576–4612 has biased composition (basic and acidic residues); sequence QLHGTDKKEEEEKEQDDVLGKNKGIEMSDEFDGKEYS. Acidic residues predominate over residues 4613 to 4631; it reads VSEDEEEDKEDEGSEDEPL. Composition is skewed to basic and acidic residues over residues 4641–4652 and 4661–4687; these read DAEKADEKPWNK and MNEKNESGPSIVDKDTRSRELRAKDDG. Acidic residues-rich tracts occupy residues 4688–4698 and 4706–4721; these read VETADEPEESN and GNDENVEQDDFDDTDN. Basic and acidic residues predominate over residues 4722–4732; it reads LEEKIQTKEEA. Residues 4740–4750 show a composition bias toward acidic residues; it reads VDNEQIDDDME. Residues 4751-4762 are compositionally biased toward basic and acidic residues; the sequence is MDKTEEVEKEDA. The segment covering 4779 to 4798 has biased composition (acidic residues); that stretch reads GENDQEETQEPSEENMEAEA. Basic and acidic residues predominate over residues 4799-4810; that stretch reads EDRCGSPQKEEP. Residues 4811-4822 show a composition bias toward acidic residues; it reads GNDLEQEPETEP. A compositionally biased stretch (basic and acidic residues) spans 4823-4834; sequence IEGKEVMSEDMM. Composition is skewed to polar residues over residues 4839–4855, 4864–4874, 4916–4928, and 5030–5040; these read RNDNISGVESGSQNPHG, TAPQENLSATD, PQNQSSTAQQTKV, and SKPSISNSIAE. The Nuclear localization signal motif lies at 5157 to 5164; the sequence is MKKVIPYI. In terms of domain architecture, VWFA spans 5186–5387; that stretch reads QVVIAVDDSR…EALPRTLGDV (202 aa). The stretch at 5271 to 5291 forms a coiled coil; sequence VVNLLRNMNEMLENLASTRRQ.

This sequence belongs to the midasin family. As to quaternary structure, associates with pre-60S ribosomes in the nucleoplasm. Constitutively and ubiquitously expressed. Mostly observed in the shoot apex and root tip, and, to a lower extent, in mature seeds, seedling (excluding the hypocotyl), roots, stems, leaves and flowers.

Its subcellular location is the nucleus. It is found in the nucleolus. The protein localises to the nucleoplasm. Its function is as follows. Nuclear chaperone required for maturation and nuclear export of pre-60S ribosome subunits. Functions at successive maturation steps to remove ribosomal factors at critical transition points, first driving the exit of early pre-60S particles from the nucleolus and then driving late pre-60S particles from the nucleus. Required for female gametophyte development. Involved in the expression regulation of genes related to plant growth and development. This Arabidopsis thaliana (Mouse-ear cress) protein is Midasin.